Here is a 104-residue protein sequence, read N- to C-terminus: L-rhamnose mutarotase (104 aa).

Tyr18 contributes to the substrate binding site. The active-site Proton donor is the His22. Residues Tyr41 and Trp76–Trp77 contribute to the substrate site.

It belongs to the rhamnose mutarotase family. As to quaternary structure, homodimer.

The protein localises to the cytoplasm. The enzyme catalyses alpha-L-rhamnose = beta-L-rhamnose. The protein operates within carbohydrate metabolism; L-rhamnose metabolism. Its function is as follows. Involved in the anomeric conversion of L-rhamnose. This chain is L-rhamnose mutarotase, found in Klebsiella pneumoniae subsp. pneumoniae (strain ATCC 700721 / MGH 78578).